The chain runs to 226 residues: ATP synthase subunit a (226 aa).

Transmembrane regions (helical) follow at residues 22 to 42, 73 to 93, 102 to 122, 135 to 155, 173 to 193, and 202 to 222; these read SMNW…FWLI, IIIF…SLIP, LLLN…YLIY, LNSP…SLII, LILT…PINL, and LEIF…ILYF.

It belongs to the ATPase A chain family. F-type ATPases have 2 components, CF(1) - the catalytic core - and CF(0) - the membrane proton channel. CF(1) has five subunits: alpha(3), beta(3), gamma(1), delta(1), epsilon(1). CF(0) has three main subunits: a, b and c.

The protein localises to the mitochondrion inner membrane. Mitochondrial membrane ATP synthase (F(1)F(0) ATP synthase or Complex V) produces ATP from ADP in the presence of a proton gradient across the membrane which is generated by electron transport complexes of the respiratory chain. F-type ATPases consist of two structural domains, F(1) - containing the extramembraneous catalytic core and F(0) - containing the membrane proton channel, linked together by a central stalk and a peripheral stalk. During catalysis, ATP synthesis in the catalytic domain of F(1) is coupled via a rotary mechanism of the central stalk subunits to proton translocation. Key component of the proton channel; it may play a direct role in the translocation of protons across the membrane. The polypeptide is ATP synthase subunit a (ATP6) (Apis mellifera ligustica (Common honeybee)).